A 427-amino-acid chain; its full sequence is UDP-N-acetylglucosamine--N-acetylmuramyl-(pentapeptide) pyrophosphoryl-undecaprenol N-acetylglucosamine transferase (427 aa).

UDP-N-acetyl-alpha-D-glucosamine is bound by residues 29–31 (TGG), Asn141, Arg177, Ser205, Ile258, and Gln303. The tract at residues 408–427 (SLHPIPDSRFPIRTSAGGAQ) is disordered.

Belongs to the glycosyltransferase 28 family. MurG subfamily.

It is found in the cell inner membrane. It carries out the reaction di-trans,octa-cis-undecaprenyl diphospho-N-acetyl-alpha-D-muramoyl-L-alanyl-D-glutamyl-meso-2,6-diaminopimeloyl-D-alanyl-D-alanine + UDP-N-acetyl-alpha-D-glucosamine = di-trans,octa-cis-undecaprenyl diphospho-[N-acetyl-alpha-D-glucosaminyl-(1-&gt;4)]-N-acetyl-alpha-D-muramoyl-L-alanyl-D-glutamyl-meso-2,6-diaminopimeloyl-D-alanyl-D-alanine + UDP + H(+). The protein operates within cell wall biogenesis; peptidoglycan biosynthesis. Cell wall formation. Catalyzes the transfer of a GlcNAc subunit on undecaprenyl-pyrophosphoryl-MurNAc-pentapeptide (lipid intermediate I) to form undecaprenyl-pyrophosphoryl-MurNAc-(pentapeptide)GlcNAc (lipid intermediate II). The chain is UDP-N-acetylglucosamine--N-acetylmuramyl-(pentapeptide) pyrophosphoryl-undecaprenol N-acetylglucosamine transferase from Xanthomonas campestris pv. campestris (strain B100).